The primary structure comprises 151 residues: Nucleoside diphosphate kinase (151 aa).

ATP-binding residues include Lys-10, Phe-58, Arg-86, Thr-92, Arg-103, and Asn-113. His-116 (pros-phosphohistidine intermediate) is an active-site residue.

This sequence belongs to the NDK family. Homotetramer. Mg(2+) is required as a cofactor.

Its subcellular location is the cytoplasm. The enzyme catalyses dZDP + ATP = dZTP + ADP. The catalysed reaction is a 2'-deoxyribonucleoside 5'-diphosphate + ATP = a 2'-deoxyribonucleoside 5'-triphosphate + ADP. It carries out the reaction a ribonucleoside 5'-diphosphate + ATP = a ribonucleoside 5'-triphosphate + ADP. The protein operates within purine metabolism. Functionally, major role in the synthesis of nucleoside triphosphates other than ATP. The ATP gamma phosphate is transferred to the NDP beta phosphate via a ping-pong mechanism, using a phosphorylated active-site intermediate. (Microbial infection) Catalyzes the phosphorylation of dZDP to dZTP, when the bacterium is infected by a phage that produces the substrate for the synthesis of dZTP (2- amino-2'-deoxyadenosine 5'-triphosphate), which is then used by the phage as a DNA polymerase substrate. The polypeptide is Nucleoside diphosphate kinase (Synechococcus sp. (strain CC9605)).